The following is a 155-amino-acid chain: Ribosomal RNA large subunit methyltransferase H (155 aa).

S-adenosyl-L-methionine is bound by residues leucine 73, glycine 104, and 123–128; that span reads LSPLTL.

It belongs to the RNA methyltransferase RlmH family. As to quaternary structure, homodimer.

It is found in the cytoplasm. It catalyses the reaction pseudouridine(1915) in 23S rRNA + S-adenosyl-L-methionine = N(3)-methylpseudouridine(1915) in 23S rRNA + S-adenosyl-L-homocysteine + H(+). Its function is as follows. Specifically methylates the pseudouridine at position 1915 (m3Psi1915) in 23S rRNA. This chain is Ribosomal RNA large subunit methyltransferase H, found in Ectopseudomonas mendocina (strain ymp) (Pseudomonas mendocina).